We begin with the raw amino-acid sequence, 237 residues long: 7-cyano-7-deazaguanine synthase (237 aa).

9-19 (YSGGLDSTTCL) contributes to the ATP binding site. Zn(2+) is bound by residues cysteine 189, cysteine 199, cysteine 202, and cysteine 205.

This sequence belongs to the QueC family. The cofactor is Zn(2+).

It catalyses the reaction 7-carboxy-7-deazaguanine + NH4(+) + ATP = 7-cyano-7-deazaguanine + ADP + phosphate + H2O + H(+). The protein operates within purine metabolism; 7-cyano-7-deazaguanine biosynthesis. Its function is as follows. Catalyzes the ATP-dependent conversion of 7-carboxy-7-deazaguanine (CDG) to 7-cyano-7-deazaguanine (preQ(0)). The sequence is that of 7-cyano-7-deazaguanine synthase from Geobacter sulfurreducens (strain ATCC 51573 / DSM 12127 / PCA).